Consider the following 387-residue polypeptide: Galactokinase (387 aa).

33-36 contacts substrate; that stretch reads EHID. ATP is bound by residues serine 67 and 124 to 130; that span reads GAGLSSS. Residues serine 130 and glutamate 162 each coordinate Mg(2+). The Proton acceptor role is filled by aspartate 174. Tyrosine 224 contributes to the substrate binding site.

Belongs to the GHMP kinase family. GalK subfamily.

It is found in the cytoplasm. It carries out the reaction alpha-D-galactose + ATP = alpha-D-galactose 1-phosphate + ADP + H(+). Its pathway is carbohydrate metabolism; galactose metabolism. Functionally, catalyzes the transfer of the gamma-phosphate of ATP to D-galactose to form alpha-D-galactose-1-phosphate (Gal-1-P). In Clostridium perfringens (strain ATCC 13124 / DSM 756 / JCM 1290 / NCIMB 6125 / NCTC 8237 / Type A), this protein is Galactokinase.